Consider the following 544-residue polypeptide: Aspartokinase 2, chloroplastic (544 aa).

Residues 1–84 (MASLQLYGVK…SSGTGKELTC (84 aa)) constitute a chloroplast transit peptide. The ATP site is built by K87, G90, and S119. E203 contacts substrate. 2 ACT domains span residues 401-479 (IAST…RRSI) and 481-544 (SLIG…ETDP).

The protein belongs to the aspartokinase family. As to expression, expressed in stems, leaves, floral organs and young seedlings.

The protein localises to the plastid. Its subcellular location is the chloroplast. It catalyses the reaction L-aspartate + ATP = 4-phospho-L-aspartate + ADP. It functions in the pathway amino-acid biosynthesis; L-lysine biosynthesis via DAP pathway; (S)-tetrahydrodipicolinate from L-aspartate: step 1/4. Its pathway is amino-acid biosynthesis; L-methionine biosynthesis via de novo pathway; L-homoserine from L-aspartate: step 1/3. The protein operates within amino-acid biosynthesis; L-threonine biosynthesis; L-threonine from L-aspartate: step 1/5. Allosterically inhibited by lysine, but not by S-adenosyl-L-methionine (SAM). K(0.5) for lysine in the presence of physiological concentrations of substrates is 12.5 uM. No inhibition by threonine or leucine and no activation or inhibition by alanine, cysteine, isoleucine, serine, valine, methionine, glutamine, asparagine, glutamic acid or arginine. Involved in the first step of essential amino acids lysine, threonine, methionine and isoleucine synthesis via the aspartate-family pathway. This chain is Aspartokinase 2, chloroplastic (AK2), found in Arabidopsis thaliana (Mouse-ear cress).